The chain runs to 182 residues: Transcription termination/antitermination protein NusG (182 aa).

The 32-residue stretch at 130-161 (VGEVVRVNEGPFADFNGTVEEVDYEKSRLKVS) folds into the KOW domain.

Belongs to the NusG family.

Functionally, participates in transcription elongation, termination and antitermination. The sequence is that of Transcription termination/antitermination protein NusG from Vibrio vulnificus (strain CMCP6).